A 533-amino-acid chain; its full sequence is UDP-glucuronosyltransferase 1-2 (533 aa).

A signal peptide spans 1–27; sequence MDTGLCVPLRGISGLLLLLCALPWAEG. 3 N-linked (GlcNAc...) asparagine glycosylation sites follow: Asn141, Asn295, and Asn433. A helical transmembrane segment spans residues 491–511; that stretch reads VIGFLLAIVLTVVFIVFKCCA.

Belongs to the UDP-glycosyltransferase family. Expressed in kidney.

Its subcellular location is the microsome. It is found in the endoplasmic reticulum membrane. It carries out the reaction glucuronate acceptor + UDP-alpha-D-glucuronate = acceptor beta-D-glucuronoside + UDP + H(+). Its function is as follows. UDPGT is of major importance in the conjugation and subsequent elimination of potentially toxic xenobiotics and endogenous compounds. This is UDP-glucuronosyltransferase 1-2 (Ugt1a2) from Mus musculus (Mouse).